The following is a 447-amino-acid chain: UDP-glycosyltransferase 76E3 (447 aa).

UDP-alpha-D-glucose contacts are provided by residues Ser269, 328-330, 345-353, and 367-370; these read APQ, HCGWNSTLE, and QGEQ.

This sequence belongs to the UDP-glycosyltransferase family.

This chain is UDP-glycosyltransferase 76E3 (UGT76E3), found in Arabidopsis thaliana (Mouse-ear cress).